The sequence spans 215 residues: Cytochrome b6 (215 aa).

Residues 32-52 (IFYCLGGITFTCFLVQVATGF) traverse the membrane as a helical segment. Cys35 is a heme c binding site. Residues His86 and His100 each coordinate heme b. Transmembrane regions (helical) follow at residues 90–110 (ASMM…TGGF), 116–136 (STWI…VTGY), and 186–206 (LHTF…FLMI). Residues His187 and His202 each coordinate heme b.

This sequence belongs to the cytochrome b family. PetB subfamily. In terms of assembly, the 4 large subunits of the cytochrome b6-f complex are cytochrome b6, subunit IV (17 kDa polypeptide, PetD), cytochrome f and the Rieske protein, while the 4 small subunits are PetG, PetL, PetM and PetN. The complex functions as a dimer. It depends on heme b as a cofactor. The cofactor is heme c.

Its subcellular location is the plastid. It is found in the chloroplast thylakoid membrane. Functionally, component of the cytochrome b6-f complex, which mediates electron transfer between photosystem II (PSII) and photosystem I (PSI), cyclic electron flow around PSI, and state transitions. The protein is Cytochrome b6 of Tetradesmus obliquus (Green alga).